We begin with the raw amino-acid sequence, 832 residues long: Protein P (832 aa).

Positions 1–177 (MPLSCQHFRK…FCGSPYSWEQ (177 aa)) are terminal protein domain (TP). The spacer stretch occupies residues 178–335 (ELQHGAEPFC…NCLSHIVNLL (158 aa)). The disordered stretch occupies residues 198–264 (SIGPAVPSQH…HNTASSSSSC (67 aa)). The segment at 336–679 (EDWGPCTEHG…YLTLYPVARQ (344 aa)) is polymerase/reverse transcriptase domain (RT). The Reverse transcriptase domain occupies 346-589 (EHLIRIPRTP…YSLHFMGYVI (244 aa)). D418, D540, and D541 together coordinate Mg(2+).

It belongs to the hepadnaviridae P protein family.

The enzyme catalyses DNA(n) + a 2'-deoxyribonucleoside 5'-triphosphate = DNA(n+1) + diphosphate. It catalyses the reaction Endonucleolytic cleavage to 5'-phosphomonoester.. Activated by host HSP70 and HSP40 in vitro to be able to bind the epsilon loop of the pgRNA. Because deletion of the RNase H region renders the protein partly chaperone-independent, the chaperones may be needed indirectly to relieve occlusion of the RNA-binding site by this domain. Inhibited by several reverse-transcriptase inhibitors: Lamivudine, Adefovir and Entecavir. Functionally, multifunctional enzyme that converts the viral RNA genome into dsDNA in viral cytoplasmic capsids. This enzyme displays a DNA polymerase activity that can copy either DNA or RNA templates, and a ribonuclease H (RNase H) activity that cleaves the RNA strand of RNA-DNA heteroduplexes in a partially processive 3'- to 5'-endonucleasic mode. Neo-synthesized pregenomic RNA (pgRNA) are encapsidated together with the P protein, and reverse-transcribed inside the nucleocapsid. Initiation of reverse-transcription occurs first by binding the epsilon loop on the pgRNA genome, and is initiated by protein priming, thereby the 5'-end of (-)DNA is covalently linked to P protein. Partial (+)DNA is synthesized from the (-)DNA template and generates the relaxed circular DNA (RC-DNA) genome. After budding and infection, the RC-DNA migrates in the nucleus, and is converted into a plasmid-like covalently closed circular DNA (cccDNA). The activity of P protein does not seem to be necessary for cccDNA generation, and is presumably released from (+)DNA by host nuclear DNA repair machinery. The chain is Protein P from Pongo pygmaeus (Bornean orangutan).